The primary structure comprises 1185 residues: AT-rich interactive domain-containing protein 5B (1185 aa).

5 disordered regions span residues 248–281 (PNLK…ESKA), 413–550 (KGEE…PDED), 713–742 (ISKK…PIAI), 883–932 (HQQE…EGKG), and 1033–1058 (HLPK…LHGL). Residues 252–261 (GRPRKKKPCP) are compositionally biased toward basic residues. Residues 321–413 (RADEQAFLVA…LILPYERFIK (93 aa)) enclose the ARID domain. A compositionally biased stretch (basic and acidic residues) spans 447-461 (IKNENQKSKKEKDNA). Polar residues predominate over residues 462 to 471 (QKPQDASEVS). Over residues 473-487 (EQEKDQESADQKNFT) the composition is skewed to basic and acidic residues. Positions 1034–1053 (LPKETSVKEKVPDAEGEGSK) are enriched in basic and acidic residues.

Belongs to the ARID5B family.

The protein localises to the nucleus. Functionally, transcription coactivator that binds to the 5'-AATA[CT]-3' core sequence and plays a key role in adipogenesis and liver development. Required for adipogenesis: regulates triglyceride metabolism in adipocytes by regulating expression of adipogenic genes. The chain is AT-rich interactive domain-containing protein 5B (ARID5B) from Gallus gallus (Chicken).